Reading from the N-terminus, the 315-residue chain is GTP cyclohydrolase MptA (315 aa).

This sequence belongs to the GTP cyclohydrolase IV family. In terms of assembly, homodimer. Requires Fe(2+) as cofactor.

The catalysed reaction is GTP + H2O = 7,8-dihydroneopterin 2',3'-cyclic phosphate + formate + diphosphate + H(+). It participates in cofactor biosynthesis; 5,6,7,8-tetrahydromethanopterin biosynthesis. In terms of biological role, converts GTP to 7,8-dihydro-D-neopterin 2',3'-cyclic phosphate, the first intermediate in the biosynthesis of coenzyme methanopterin. This Methanococcus maripaludis (strain C6 / ATCC BAA-1332) protein is GTP cyclohydrolase MptA.